We begin with the raw amino-acid sequence, 1037 residues long: Cysteine-rich motor neuron 1 protein (1037 aa).

An N-terminal signal peptide occupies residues 1–34 (MYLVAGGRGLAGCGHLSVSLLGLLLLLARSGTRA). Residues 35-112 (LVCLPCDESK…EYEVGVCEDE (78 aa)) form the IGFBP N-terminal domain. Topologically, residues 35 to 940 (LVCLPCDESK…HPGEDSSLDS (906 aa)) are extracellular. Disulfide bonds link cysteine 37/cysteine 60, cysteine 40/cysteine 62, cysteine 45/cysteine 63, cysteine 51/cysteine 66, cysteine 74/cysteine 90, and cysteine 84/cysteine 109. A Cell attachment site motif is present at residues 314-316 (RGD). Residue asparagine 330 is glycosylated (N-linked (GlcNAc...) asparagine). VWFC domains lie at 334–391 (PACV…PVCE) and 401–457 (AGCY…PVCE). Antistasin-like domains are found at residues 469–498 (CGEL…TCQC), 505–532 (CLGL…LCQC), 539–564 (CRPT…ICRC), and 567–592 (CPEL…ICKC). VWFC domains are found at residues 606–663 (GTCL…PSCT), 677–735 (SICH…PQCT), 751–809 (SYCR…PYCL), and 817–874 (VVCH…PMCP). A helical transmembrane segment spans residues 941–961 (IVSVVVPIIICLSIIIAFLLI). Over 962-1037 (NQKKQWVPLL…LQADNFYQTV (76 aa)) the chain is Cytoplasmic. Threonine 1036 carries the post-translational modification Phosphothreonine.

In terms of assembly, interacts with BMP4 and BMP7. As to expression, expressed during embryonic development in brain, kidney, spinal cord, testis, lens, vibrissae, pinna, tooth primordia and in specific regions of the CNS. Expressed in adult lens. Displays male-specific expression in the fetal gonads with the strongest expression in the Sertoli cells of developing testis.

The protein resides in the membrane. Functionally, may play a role in CNS development by interacting with growth factors implicated in motor neuron differentiation and survival. May play a role in capillary formation and maintenance during angiogenesis. Modulates BMP activity by affecting its processing and delivery to the cell surface. This Mus musculus (Mouse) protein is Cysteine-rich motor neuron 1 protein (Crim1).